We begin with the raw amino-acid sequence, 512 residues long: Keratin, type I cytoskeletal 24 (512 aa).

Residues 1–21 form a disordered region; the sequence is MFCSAQKGSCSSRVSSSGAVG. The interval 1-140 is head; sequence MFCSAQKGSC…GYDGGLLSGS (140 aa). Residues 8–21 show a composition bias toward low complexity; that stretch reads GSCSSRVSSSGAVG. The interval 141–176 is coil 1A; sequence EKQTMQDLNDRLANYLDKVRALEEANTDLECKIKDW. Residues 141-455 enclose the IF rod domain; that stretch reads EKQTMQDLND…RLLNGDGGGC (315 aa). The segment at 177–197 is linker 1; sequence YGKHGSVKGGSGRDYSQYYSI. The segment at 198-289 is coil 1B; it reads IEDLKKQILS…KNHEEEMKCM (92 aa). The segment at 290 to 312 is linker 12; that stretch reads QGSSGGDVTVEMNAAPGVDLTKL. The interval 313–451 is coil 2; that stretch reads LNDMRAQYEA…ETYRRLLNGD (139 aa). A tail region spans residues 452–512; it reads GGGCDYRNLV…VSNISEVKIK (61 aa).

It belongs to the intermediate filament family. As to quaternary structure, heterotetramer of two type I and two type II keratins.

The protein is Keratin, type I cytoskeletal 24 (Krt24) of Mus musculus (Mouse).